The chain runs to 797 residues: Plakophilin-3 (797 aa).

The tract at residues glutamine 56–glycine 82 is disordered. An Omega-N-methylarginine modification is found at arginine 81. 3 positions are modified to phosphoserine: serine 123, serine 180, and serine 183. A Phosphotyrosine; by SRC modification is found at tyrosine 195. Serine 238 and serine 240 each carry phosphoserine. Threonine 250 is subject to Phosphothreonine. At arginine 261 the chain carries Omega-N-methylarginine. A required for interaction with SFN region spans residues serine 283–leucine 288. Residues serine 285, serine 313, serine 314, and serine 331 each carry the phosphoserine modification. The required for interaction with GSK3B stretch occupies residues leucine 294 to valine 724. ARM repeat units follow at residues serine 305–tyrosine 348, alanine 351–tyrosine 390, alanine 393–serine 432, threonine 449–serine 487, alanine 491–tyrosine 536, proline 596–alanine 637, valine 645–arginine 684, and lysine 689–valine 730. Residues alanine 516–proline 797 form a required for binding to PKP2 mRNA region.

Belongs to the beta-catenin family. In terms of assembly, found in a complex composed of CDH1, RAP1A and PKP3; PKP3 acts as a scaffold protein within the complex, the complex is required for CDH1 localization to mature desmosome cell junctions. Interacts with FXR1; the interaction facilitates the binding of PKP3 to PKP2 mRNA. Interacts (via ARM repeats) with GSK3B; the interaction may be involved in PKP3 protein degradation. Interacts with hyperphosphorylated and hypophosphorylated RB1; the interaction inhibits RB1 interaction with and repression of the transcription factor E2F1, potentially via sequestering RB1 to the cytoplasm. Interacts with CDKN1A; the interaction sequesters CDKN1A to the cytoplasm thereby repressing its role as an inhibitor of CDK4- and CDK6-driven RB1 phosphorylation. Interacts (via N-terminus) with SFN; the interaction maintains the cytoplasmic pool of PKP3, facilitates PKP3 exchange at desmosomes and restricts PKP3 localization to existing desmosome cell junctions. Interacts (via N-terminus) with JUP; the interaction is required for PKP3 localization to desmosome cell-cell junctions. Phosphorylated at Ser-285 when localized to the cytoplasm, PKP3 at desmosome cell junctions is not phosphorylated. Phosphorylation at Try-195 by SRC is induced by reactive oxygen species and potentially acts as a release mechanism from desmosome cell-cell junctions. In terms of tissue distribution, expressed in the epidermis of the skin, in squamous non-cornifying epithelial cells in the vagina, single layer epithelia of the duodenum and pancreas acini and non-epithelial dendritic reticulum cells of lymph node follicles (at protein level). As to expression, expressed in the oral cavity mucosa, epidermis and small intestine epithelium (at protein level). Expressed in the oral cavity mucosa and epithelial cells of the crypts and villi in the small intestine (at protein level). Expressed in the epidermis with more abundant expression found in the basal and low spinous cells (at protein level).

Its subcellular location is the nucleus. The protein resides in the cell junction. It is found in the desmosome. It localises to the cytoplasm. The protein localises to the cell membrane. Its subcellular location is the adherens junction. A component of desmosome cell-cell junctions which are required for positive regulation of cellular adhesion. Required for the localization of DSG2, DSP and PKP2 to mature desmosome junctions. May also play a role in the maintenance of DSG3 protein abundance in keratinocytes. Required for the formation of DSP-containing desmosome precursors in the cytoplasm during desmosome assembly. Also regulates the accumulation of CDH1 to mature desmosome junctions, via cAMP-dependent signaling and its interaction with activated RAP1A. Positively regulates the stabilization of PKP2 mRNA and therefore protein abundance, via its interaction with FXR1, may also regulate the protein abundance of DSP via the same mechanism. May also regulate the protein abundance of the desmosome component PKP1. Required for the organization of desmosome junctions at intercellular borders between basal keratinocytes of the epidermis, as a result plays a role in maintenance of the dermal barrier and regulation of the dermal inflammatory response. Required during epidermal keratinocyte differentiation for cell adherence at tricellular cell-cell contacts, via regulation of the timely formation of adherens junctions and desmosomes in a calcium-dependent manner, and may also play a role in the organization of the intracellular actin fiber belt. Acts as a negative regulator of the inflammatory response in hematopoietic cells of the skin and intestine, via modulation of proinflammatory cytokine production. Important for epithelial barrier maintenance in the intestine to reduce intestinal permeability, thereby plays a role in protection from intestinal-derived endotoxemia. Required for the development of hair follicles, via a role in the regulation of inner root sheaf length, correct alignment and anterior-posterior polarity of hair follicles. Promotes proliferation and cell-cycle G1/S phase transition of keratinocytes. Promotes E2F1-driven transcription of G1/S phase promoting genes by acting to release E2F1 from its inhibitory interaction with RB1, via sequestering RB1 and CDKN1A to the cytoplasm and thereby increasing CDK4- and CDK6-driven phosphorylation of RB1. May act as a scaffold protein to facilitate MAPK phosphorylation of RPS6KA protein family members and subsequently promote downstream EGFR signaling. May play a role in the positive regulation of transcription of Wnt-mediated TCF-responsive target genes. The sequence is that of Plakophilin-3 (PKP3) from Homo sapiens (Human).